The primary structure comprises 363 residues: uncharacterized protein (363 aa).

29-36 (GSINSGKT) contributes to the ATP binding site.

It belongs to the archaeal ATPase family.

This is an uncharacterized protein from Methanocaldococcus jannaschii (strain ATCC 43067 / DSM 2661 / JAL-1 / JCM 10045 / NBRC 100440) (Methanococcus jannaschii).